A 499-amino-acid polypeptide reads, in one-letter code: Glucose-6-phosphate exchanger SLC37A2 (499 aa).

A helical transmembrane segment spans residues 21-40; it reads YRGFIIVMTFLFYTCYHMSR. Residues asparagine 53, asparagine 62, and asparagine 66 are each glycosylated (N-linked (GlcNAc...) asparagine). The next 11 helical transmembrane spans lie at 86–106, 116–136, 138–158, 187–207, 208–228, 302–322, 334–354, 362–382, 391–411, 434–454, and 458–478; these read GSLD…SGIF, LSGG…GYYW, IHAL…QTTG, AVGN…AWGL, SFIV…FFLV, LCLL…PLYI, GDLS…AGGI, AITC…YNYL, VAML…ITTA, AIID…AGVL, and GWNY…LLLV.

Belongs to the major facilitator superfamily. Organophosphate:Pi antiporter (OPA) (TC 2.A.1.4) family.

It is found in the endoplasmic reticulum membrane. It carries out the reaction D-glucose 6-phosphate(in) + phosphate(out) = D-glucose 6-phosphate(out) + phosphate(in). Inorganic phosphate and glucose-6-phosphate antiporter. May transport cytoplasmic glucose-6-phosphate into the lumen of the endoplasmic reticulum and translocate inorganic phosphate into the opposite direction. This Xenopus tropicalis (Western clawed frog) protein is Glucose-6-phosphate exchanger SLC37A2.